We begin with the raw amino-acid sequence, 214 residues long: Large ribosomal subunit protein uL16 (214 aa).

Arg-32 carries the citrulline modification. Lys-175 is covalently cross-linked (Glycyl lysine isopeptide (Lys-Gly) (interchain with G-Cter in SUMO2)). Lys-188 is covalently cross-linked (Glycyl lysine isopeptide (Lys-Gly) (interchain with G-Cter in ubiquitin)).

It belongs to the universal ribosomal protein uL16 family. As to quaternary structure, component of the large ribosomal subunit. Mature ribosomes consist of a small (40S) and a large (60S) subunit. The 40S subunit contains about 33 different proteins and 1 molecule of RNA (18S). The 60S subunit contains about 49 different proteins and 3 molecules of RNA (28S, 5.8S and 5S). Citrullinated by PADI4. Post-translationally, ufmylated by UFL1.

It is found in the cytoplasm. Component of the large ribosomal subunit. Plays a role in the formation of actively translating ribosomes. May play a role in the embryonic brain development. The polypeptide is Large ribosomal subunit protein uL16 (Pongo abelii (Sumatran orangutan)).